Reading from the N-terminus, the 381-residue chain is 1-deoxy-D-xylulose 5-phosphate reductoisomerase (381 aa).

Residues Thr10, Gly11, Ser12, Ile13, Asn38, and Asn121 each coordinate NADPH. Lys122 contributes to the 1-deoxy-D-xylulose 5-phosphate binding site. Position 123 (Glu123) interacts with NADPH. Mn(2+) is bound at residue Asp147. Residues Ser148, Glu149, Ser173, and His196 each coordinate 1-deoxy-D-xylulose 5-phosphate. Position 149 (Glu149) interacts with Mn(2+). Residue Gly202 coordinates NADPH. The 1-deoxy-D-xylulose 5-phosphate site is built by Ser209, Asn214, Lys215, and Glu218. Glu218 contacts Mn(2+).

It belongs to the DXR family. The cofactor is Mg(2+). Requires Mn(2+) as cofactor.

It carries out the reaction 2-C-methyl-D-erythritol 4-phosphate + NADP(+) = 1-deoxy-D-xylulose 5-phosphate + NADPH + H(+). The protein operates within isoprenoid biosynthesis; isopentenyl diphosphate biosynthesis via DXP pathway; isopentenyl diphosphate from 1-deoxy-D-xylulose 5-phosphate: step 1/6. Its function is as follows. Catalyzes the NADPH-dependent rearrangement and reduction of 1-deoxy-D-xylulose-5-phosphate (DXP) to 2-C-methyl-D-erythritol 4-phosphate (MEP). The polypeptide is 1-deoxy-D-xylulose 5-phosphate reductoisomerase (Alkaliphilus oremlandii (strain OhILAs) (Clostridium oremlandii (strain OhILAs))).